The sequence spans 1506 residues: ABC transporter C family member 9 (1506 aa).

The next 11 helical transmembrane spans lie at 37–57, 84–104, 116–136, 150–170, 179–199, 315–335, 350–370, 427–447, 452–472, 541–561, and 567–587; these read MQVT…FGVV, ISLL…LLLF, VSVF…SVVV, MLRS…AHFI, FQDY…AVSI, AINA…PYLI, LNHG…ETVT, FIWY…AIYI, LGLG…CNYP, FILW…CMLM, and AGAV…IFGL. The region spanning 314–596 is the ABC transmembrane type-1 1 domain; sequence AAINAVFAVV…LPDLLSALVQ (283 aa). The region spanning 630-853 is the ABC transporter 1 domain; sequence VEIENGAFSW…NIGFEVLVGA (224 aa). 665-672 provides a ligand contact to ATP; sequence GAVGSGKS. 5 consecutive transmembrane segments (helical) span residues 934–956, 976–996, 1048–1068, 1167–1187, and 1191–1211; these read LLVP…SNYW, ILLV…ARTI, MAVK…TIFV, LSHF…EGVI, and IAGL…TVIW. Positions 936–1218 constitute an ABC transmembrane type-1 2 domain; it reads VPFIILAQSC…VIWNICNAEN (283 aa). An ABC transporter 2 domain is found at 1257-1489; sequence FRDLQVRYAE…EDSFFSKLIK (233 aa). 1289-1296 lines the ATP pocket; it reads GRTGSGKS.

It belongs to the ABC transporter superfamily. ABCC family. Conjugate transporter (TC 3.A.1.208) subfamily. Ubiquitous.

It localises to the membrane. It catalyses the reaction ATP + H2O + xenobioticSide 1 = ADP + phosphate + xenobioticSide 2.. Its function is as follows. Pump for glutathione S-conjugates. This Arabidopsis thaliana (Mouse-ear cress) protein is ABC transporter C family member 9 (ABCC9).